Reading from the N-terminus, the 109-residue chain is Nucleoid-associated protein plu3840 (109 aa).

Disordered stretches follow at residues 1–23 (MFGK…KMQK) and 89–109 (KEKM…KMPF).

Belongs to the YbaB/EbfC family. As to quaternary structure, homodimer.

The protein localises to the cytoplasm. The protein resides in the nucleoid. In terms of biological role, binds to DNA and alters its conformation. May be involved in regulation of gene expression, nucleoid organization and DNA protection. The protein is Nucleoid-associated protein plu3840 of Photorhabdus laumondii subsp. laumondii (strain DSM 15139 / CIP 105565 / TT01) (Photorhabdus luminescens subsp. laumondii).